We begin with the raw amino-acid sequence, 147 residues long: Hemoglobin subunit gamma-2 (147 aa).

The 145-residue stretch at 3–147 folds into the Globin domain; that stretch reads HFTEEDKATI…VASALSSRYH (145 aa). Residue threonine 13 is modified to Phosphothreonine. Serine 45, serine 51, and serine 53 each carry phosphoserine. N6-acetyllysine is present on lysine 60. Residue histidine 64 participates in heme b binding. Lysine 83 carries the post-translational modification N6-acetyllysine. Histidine 93 provides a ligand contact to heme b. Cysteine 94 carries the S-nitrosocysteine modification. Phosphoserine occurs at positions 140, 143, and 144.

This sequence belongs to the globin family. As to quaternary structure, heterotetramer of two alpha chains and two gamma chains in fetal hemoglobin (Hb F). In terms of tissue distribution, red blood cells.

Functionally, gamma chains make up the fetal hemoglobin F, in combination with alpha chains. The protein is Hemoglobin subunit gamma-2 (HBG2) of Gorilla gorilla gorilla (Western lowland gorilla).